The primary structure comprises 119 residues: MKVLLGLLLGYSVLILAHELPRTQHPPKEELPYWCTYVKNCDFCWDCQNGICKNKITNESISMNSIVNCIVNRNSWGCFYEISVKMPNHHNMECSHPRPYTGNEIFMEKWGGVIIGQSL.

An N-terminal signal peptide occupies residues 1 to 17; the sequence is MKVLLGLLLGYSVLILA.

The protein belongs to the asfivirus MGF 110 family.

The polypeptide is Protein MGF 110-11L (Ornithodoros (relapsing fever ticks)).